The following is a 356-amino-acid chain: Holliday junction branch migration complex subunit RuvB (356 aa).

Residues 4 to 190 form a large ATPase domain (RuvB-L) region; it reads TDKLAAERII…FGIVARLEFY (187 aa). ATP-binding positions include L29, R30, G71, K74, T75, T76, 137 to 139, R180, Y190, and R227; that span reads EDY. A Mg(2+)-binding site is contributed by T75. A small ATPAse domain (RuvB-S) region spans residues 191-261; the sequence is DAEQLSRIVR…VADAALAMLD (71 aa). Residues 264-356 form a head domain (RuvB-H) region; that stretch reads PVGFDLMDRK…NLWDTPDAER (93 aa). DNA-binding residues include R300, R319, and R324.

It belongs to the RuvB family. In terms of assembly, homohexamer. Forms an RuvA(8)-RuvB(12)-Holliday junction (HJ) complex. HJ DNA is sandwiched between 2 RuvA tetramers; dsDNA enters through RuvA and exits via RuvB. An RuvB hexamer assembles on each DNA strand where it exits the tetramer. Each RuvB hexamer is contacted by two RuvA subunits (via domain III) on 2 adjacent RuvB subunits; this complex drives branch migration. In the full resolvosome a probable DNA-RuvA(4)-RuvB(12)-RuvC(2) complex forms which resolves the HJ.

The protein resides in the cytoplasm. The catalysed reaction is ATP + H2O = ADP + phosphate + H(+). Functionally, the RuvA-RuvB-RuvC complex processes Holliday junction (HJ) DNA during genetic recombination and DNA repair, while the RuvA-RuvB complex plays an important role in the rescue of blocked DNA replication forks via replication fork reversal (RFR). RuvA specifically binds to HJ cruciform DNA, conferring on it an open structure. The RuvB hexamer acts as an ATP-dependent pump, pulling dsDNA into and through the RuvAB complex. RuvB forms 2 homohexamers on either side of HJ DNA bound by 1 or 2 RuvA tetramers; 4 subunits per hexamer contact DNA at a time. Coordinated motions by a converter formed by DNA-disengaged RuvB subunits stimulates ATP hydrolysis and nucleotide exchange. Immobilization of the converter enables RuvB to convert the ATP-contained energy into a lever motion, pulling 2 nucleotides of DNA out of the RuvA tetramer per ATP hydrolyzed, thus driving DNA branch migration. The RuvB motors rotate together with the DNA substrate, which together with the progressing nucleotide cycle form the mechanistic basis for DNA recombination by continuous HJ branch migration. Branch migration allows RuvC to scan DNA until it finds its consensus sequence, where it cleaves and resolves cruciform DNA. The polypeptide is Holliday junction branch migration complex subunit RuvB (Burkholderia thailandensis (strain ATCC 700388 / DSM 13276 / CCUG 48851 / CIP 106301 / E264)).